The chain runs to 923 residues: Helicase POLQ-like (923 aa).

The disordered stretch occupies residues 1–84 (MNRTPIRRCK…STVTPIQQKI (84 aa)). A compositionally biased stretch (low complexity) spans 43–55 (STSPQSPSSSTEN). The 172-residue stretch at 178-349 (DKRLLDGENC…ALRAFVYSTN (172 aa)) folds into the Helicase ATP-binding domain. 191–198 (LPTGAGKT) contacts ATP. The short motif at 295–298 (DELH) is the DEAH box element. One can recognise a Helicase C-terminal domain in the interval 392–596 (GICQLLAKLI…CVVLKLAENI (205 aa)).

The protein belongs to the helicase family. SKI2 subfamily.

It is found in the nucleus. The protein resides in the chromosome. The enzyme catalyses Couples ATP hydrolysis with the unwinding of duplex DNA by translocating in the 3'-5' direction.. It catalyses the reaction ATP + H2O = ADP + phosphate + H(+). In terms of biological role, single-stranded 3'-5' DNA helicase that plays a key role in homology-driven double-strand break (DSB) repair. Involved in different DSB repair mechanisms that are guided by annealing of extensive stretches of complementary bases at break ends, such as microhomology-mediated end-joining (MMEJ), single-strand annealing (SSA) or synthesis-dependent strand annealing (SDSA). This Caenorhabditis elegans protein is Helicase POLQ-like.